A 140-amino-acid polypeptide reads, in one-letter code: uncharacterized protein (140 aa).

This is an uncharacterized protein from Mycoplasma genitalium (strain ATCC 33530 / DSM 19775 / NCTC 10195 / G37) (Mycoplasmoides genitalium).